Consider the following 227-residue polypeptide: Broad specificity amino-acid racemase RacX (227 aa).

51-53 (DRP) contributes to the substrate binding site. The Proton donor/acceptor role is filled by Cys82. Residues 83-85 (NTA) and Lys161 each bind substrate. The active-site Proton donor/acceptor is the Cys191.

The protein belongs to the aspartate/glutamate racemases family. In terms of assembly, homodimer.

The catalysed reaction is an L-alpha-amino acid = a D-alpha-amino acid. The enzyme catalyses (2S,6S)-2,6-diaminopimelate = meso-2,6-diaminopimelate. It carries out the reaction L-lysine = D-lysine. It catalyses the reaction L-arginine = D-arginine. The catalysed reaction is L-ornithine = D-ornithine. The enzyme catalyses L-histidine = D-histidine. It carries out the reaction L-alanine = D-alanine. It catalyses the reaction L-tyrosine = D-tyrosine. The catalysed reaction is L-phenylalanine = D-phenylalanine. The enzyme catalyses L-serine = D-serine. It carries out the reaction L-glutamine = D-glutamine. It catalyses the reaction L-methionine = D-methionine. The catalysed reaction is L-asparagine = D-asparagine. The enzyme catalyses L-homoserine = D-homoserine. Its function is as follows. Amino-acid racemase able to utilize a broad range of substrates. Preferentially catalyzes the epimerization of LL-diaminopimelate, as well as the racemization of D-lysine, L-arginine, L-ornithine, L-lysine and D-arginine. Has lower activity against D-ornithine, L-histidine, L-alanine, L-tyrosine, L-phenylalanine, L-serine, L-glutamine, L-methionine, L-asparagine and L-homoserine. Has weak activity against L-norleucine, L-aminobutyric acid and L-norvaline. Has no activity toward nine L-amino acids (Thr, Glu, Asp, Val, Leu, Ile, Trp, Cit and Aad). D-amino acids might be used as components of peptidoglycan and/or be involved in peptidoglycan metabolism and remodeling. The sequence is that of Broad specificity amino-acid racemase RacX (racX) from Bacillus subtilis (strain 168).